We begin with the raw amino-acid sequence, 67 residues long: Probable Sec-independent protein translocase protein TatE (67 aa).

The helical transmembrane segment at 4-21 (ISITKLLVVAALVVLLFG) threads the bilayer.

Belongs to the TatA/E family. TatE subfamily.

It is found in the cell inner membrane. Part of the twin-arginine translocation (Tat) system that transports large folded proteins containing a characteristic twin-arginine motif in their signal peptide across membranes. TatE shares overlapping functions with TatA. This chain is Probable Sec-independent protein translocase protein TatE, found in Salmonella arizonae (strain ATCC BAA-731 / CDC346-86 / RSK2980).